We begin with the raw amino-acid sequence, 337 residues long: UDP-3-O-acylglucosamine N-acyltransferase (337 aa).

Histidine 238 (proton acceptor) is an active-site residue.

The protein belongs to the transferase hexapeptide repeat family. LpxD subfamily. Homotrimer.

It carries out the reaction a UDP-3-O-[(3R)-3-hydroxyacyl]-alpha-D-glucosamine + a (3R)-hydroxyacyl-[ACP] = a UDP-2-N,3-O-bis[(3R)-3-hydroxyacyl]-alpha-D-glucosamine + holo-[ACP] + H(+). It functions in the pathway bacterial outer membrane biogenesis; LPS lipid A biosynthesis. Catalyzes the N-acylation of UDP-3-O-acylglucosamine using 3-hydroxyacyl-ACP as the acyl donor. Is involved in the biosynthesis of lipid A, a phosphorylated glycolipid that anchors the lipopolysaccharide to the outer membrane of the cell. The polypeptide is UDP-3-O-acylglucosamine N-acyltransferase (Xanthomonas oryzae pv. oryzae (strain KACC10331 / KXO85)).